Consider the following 480-residue polypeptide: MDELNACTECGFTTTVFSEFQGHIEKHENEHSRSSSGEMSNSQTIEWGDGIQSSTPSPRSTPPSDPTPSPDSDEHLEHHISITEITNTLIKKEPGTKGQKTVHVCPHCNFTTCMSQHMKSHLEAHERHQGQMYQCDICKMQFSQKANMHRHRMRHSGVKPYECRFCKKRFFRKDQMQEHSMTHIKTGFGFDCPVSQCNMQFSQHNALRAHLEETHTISSTNPASCKRCNLMFANSRRLLLHFQTRHDDSESSPKKENTPKRKKLSNGNALPMDPANMSITEQLQRMVKSEFSPPNTDTSDNSTSSEFDKIPPSFPMANPDILLMCLNQMNQFNGFGENIPRPMLNIPNIPLPALHNIPAVAAIVKQDQVQLWSEQTSSSVSVSAPSPSEQSHSPPANESSLSLTEKEKSPTPEKEDEENVECCHCGMMFYDNTMYLLHKSLHSDGDPFKCALCGTQCGEKYMFTTHVIFADHSTQATTSA.

The segment at 5-27 (NACTECGFTTTVFSEFQGHIEKH) adopts a C2H2-type 1 zinc-finger fold. The interval 25–75 (EKHENEHSRSSSGEMSNSQTIEWGDGIQSSTPSPRSTPPSDPTPSPDSDEH) is disordered. Residues 34–45 (SSSGEMSNSQTI) are compositionally biased toward polar residues. Pro residues predominate over residues 59–69 (RSTPPSDPTPS). 5 consecutive C2H2-type zinc fingers follow at residues 103–125 (HVCP…LEAH), 133–155 (YQCD…RMRH), 161–183 (YECR…SMTH), 190–215 (FDCP…EETH), and 223–246 (ASCK…QTRH). Disordered stretches follow at residues 243–275 (QTRH…MDPA), 290–311 (EFSP…DKIP), and 376–417 (TSSS…KEDE). Residues 244-259 (TRHDDSESSPKKENTP) are compositionally biased toward basic and acidic residues. Composition is skewed to low complexity over residues 292 to 305 (SPPN…STSS) and 376 to 403 (TSSS…SLSL). The span at 404-413 (TEKEKSPTPE) shows a compositional bias: basic and acidic residues. 2 C2H2-type zinc fingers span residues 420–442 (VECC…KSLH) and 448–472 (FKCA…FADH).

This sequence belongs to the Ikaros C2H2-type zinc-finger protein family. As to expression, expressed in the somatic gonad, hypodermis and cells in the head and tail. Expressed in amphid and phasmid sheath glia, amphid and phasmid socket glia, and in neurons in the head.

The protein localises to the nucleus. Functionally, positively regulates the expression of ver-1 in the amphid sheath glia of amphid sensory neurons. Together with ehn-3, plays a role in somatic gonad development and is required for proper gonadal primordium assembly and somatic gonad precursor cell morphology. The chain is Zinc finger protein ztf-16 from Caenorhabditis elegans.